The primary structure comprises 346 residues: Golgi-associated RAB2 interactor protein 2 (346 aa).

The segment at 275-346 (TPVESEANTS…EKHVRQPKDF (72 aa)) is disordered. Basic and acidic residues-rich tracts occupy residues 283 to 297 (TSKE…EKTP) and 334 to 346 (KLVE…PKDF).

It belongs to the GARIN family. As to quaternary structure, interacts with CALM1.

Its subcellular location is the cell projection. The protein localises to the cilium. It is found in the flagellum. Its function is as follows. Seems to play a role in sperm motility. This is Golgi-associated RAB2 interactor protein 2 (GARIN2) from Macaca fascicularis (Crab-eating macaque).